The following is a 201-amino-acid chain: ATP-dependent Clp protease proteolytic subunit 2 (201 aa).

Serine 98 functions as the Nucleophile in the catalytic mechanism. Histidine 123 is a catalytic residue.

It belongs to the peptidase S14 family. Fourteen ClpP subunits assemble into 2 heptameric rings which stack back to back to give a disk-like structure with a central cavity, resembling the structure of eukaryotic proteasomes.

The protein localises to the cytoplasm. The enzyme catalyses Hydrolysis of proteins to small peptides in the presence of ATP and magnesium. alpha-casein is the usual test substrate. In the absence of ATP, only oligopeptides shorter than five residues are hydrolyzed (such as succinyl-Leu-Tyr-|-NHMec, and Leu-Tyr-Leu-|-Tyr-Trp, in which cleavage of the -Tyr-|-Leu- and -Tyr-|-Trp bonds also occurs).. Functionally, cleaves peptides in various proteins in a process that requires ATP hydrolysis. Has a chymotrypsin-like activity. Plays a major role in the degradation of misfolded proteins. This is ATP-dependent Clp protease proteolytic subunit 2 from Rhizobium johnstonii (strain DSM 114642 / LMG 32736 / 3841) (Rhizobium leguminosarum bv. viciae).